We begin with the raw amino-acid sequence, 590 residues long: Glutamine--tRNA ligase (590 aa).

The 'HIGH' region motif lies at 55–65 (PEPNGYLHIGH). ATP is bound by residues 56-58 (EPN) and 62-68 (HIGHAKS). 2 residues coordinate L-glutamine: Asp-93 and Tyr-238. Residues Thr-257 and 292-293 (RL) each bind ATP. The 'KMSKS' region motif lies at 299-303 (ITSKR).

The protein belongs to the class-I aminoacyl-tRNA synthetase family. As to quaternary structure, monomer.

It is found in the cytoplasm. The catalysed reaction is tRNA(Gln) + L-glutamine + ATP = L-glutaminyl-tRNA(Gln) + AMP + diphosphate. This is Glutamine--tRNA ligase from Polynucleobacter necessarius subsp. necessarius (strain STIR1).